A 406-amino-acid polypeptide reads, in one-letter code: Cysteine desulfurase (406 aa).

Position 226 is an N6-(pyridoxal phosphate)lysine (lysine 226). Cysteine 364 serves as the catalytic Cysteine persulfide intermediate.

The protein belongs to the class-V pyridoxal-phosphate-dependent aminotransferase family. Csd subfamily. Homodimer. Interacts with SufE and the SufBCD complex composed of SufB, SufC and SufD. The interaction with SufE is required to mediate the direct transfer of the sulfur atom from the S-sulfanylcysteine. The cofactor is pyridoxal 5'-phosphate.

The protein resides in the cytoplasm. It catalyses the reaction (sulfur carrier)-H + L-cysteine = (sulfur carrier)-SH + L-alanine. The enzyme catalyses L-selenocysteine + AH2 = hydrogenselenide + L-alanine + A + H(+). It participates in cofactor biosynthesis; iron-sulfur cluster biosynthesis. Functionally, cysteine desulfurases mobilize the sulfur from L-cysteine to yield L-alanine, an essential step in sulfur metabolism for biosynthesis of a variety of sulfur-containing biomolecules. Component of the suf operon, which is activated and required under specific conditions such as oxidative stress and iron limitation. Acts as a potent selenocysteine lyase in vitro, that mobilizes selenium from L-selenocysteine. Selenocysteine lyase activity is however unsure in vivo. In Escherichia coli O157:H7 (strain EC4115 / EHEC), this protein is Cysteine desulfurase.